The primary structure comprises 183 residues: Helofensin-1 (183 aa).

Positions 1–26 are cleaved as a signal peptide; the sequence is MQMDWLFIAVVSAIGLLSSGVPGTQG. The C(6)C(4)C(9)C(6)CC 1; approximate repeat unit spans residues 27 to 64; the sequence is AYTTEQCRALNGTCRFYACFPKNVVIGKCDWLGWGCCA. The C(6)C(4)C(9)C(6)CC 2; approximate repeat unit spans residues 65 to 101; it reads RTPLERCTAKKGTCTASGCTETDTDHGPCDGGAQCCQ. A C(6)C(4)C(9)C(6)CC 3; approximate repeat occupies 102–139; that stretch reads RDPVKYCKFHGNVCGRGKCPMDHIPIGEQCMPGYPCCK. A C(6)C(4)C(9)C(6)CC 4; approximate repeat occupies 140 to 177; that stretch reads RDGPAYCKSKGGKCLRRCSQIVPTDIIGVCADGVPCCK.

This sequence belongs to the beta-defensin family. Helofensin subfamily. As to expression, expressed by the mandibular venom gland.

The protein resides in the secreted. Lethal toxin which possesses an inhibitory effect on direct electrical stimulation of the isolated hemi-diaphragm of mice. Neither hemorrhagic nor hemolytic activities are detected. Phospholipase A2 activity, proteolytic activity and arginine esterolytic activity are absent. This is Helofensin-1 from Heloderma suspectum cinctum (Banded Gila monster).